The primary structure comprises 95 residues: Small ribosomal subunit protein bS18 (95 aa).

Belongs to the bacterial ribosomal protein bS18 family. In terms of assembly, part of the 30S ribosomal subunit. Forms a tight heterodimer with protein bS6.

Functionally, binds as a heterodimer with protein bS6 to the central domain of the 16S rRNA, where it helps stabilize the platform of the 30S subunit. The polypeptide is Small ribosomal subunit protein bS18 (Rickettsia typhi (strain ATCC VR-144 / Wilmington)).